A 313-amino-acid chain; its full sequence is Ribosomal RNA small subunit methyltransferase H (313 aa).

S-adenosyl-L-methionine is bound by residues 35-37 (GGH), D55, F80, D102, and Q109.

The protein belongs to the methyltransferase superfamily. RsmH family.

It is found in the cytoplasm. The enzyme catalyses cytidine(1402) in 16S rRNA + S-adenosyl-L-methionine = N(4)-methylcytidine(1402) in 16S rRNA + S-adenosyl-L-homocysteine + H(+). Functionally, specifically methylates the N4 position of cytidine in position 1402 (C1402) of 16S rRNA. This chain is Ribosomal RNA small subunit methyltransferase H, found in Shewanella baltica (strain OS223).